Consider the following 918-residue polypeptide: Rap guanine nucleotide exchange factor 3 (918 aa).

At S79 the chain carries Phosphoserine. The DEP domain maps to 110-186 (ATYPTLIRDR…RDAQFYRFPG (77 aa)). Residues 218-242 (TVALRKPPGQRTDEELDLIFEELLH) form an interaction with PDE3B region. 3',5'-cyclic AMP-binding positions include 311–314 (GQLA) and 321–322 (RA). A disordered region spans residues 369-388 (TSQGAGPSRPPTPGRNRYTV). The N-terminal Ras-GEF domain occupies 384 to 521 (NRYTVMSGTP…EQYPERRRHH (138 aa)). An interaction with PDE3B region spans residues 398 to 422 (ELLLEAMRPDSSAHDPTETFLSDFL). 2 positions are modified to phosphoserine: S531 and S859. The Ras-GEF domain maps to 665-884 (SAKDLAGQLT…SRISTCSEQS (220 aa)).

In terms of assembly, interacts with PDE3B and PIK3R6; form a signaling complex that regulates phosphatidylinositol 3-kinase gamma in angiogenesis.

Its subcellular location is the cytoplasm. The protein localises to the membrane. Functionally, guanine nucleotide exchange factor (GEF) for RAP1A and RAP2A small GTPases that is activated by binding cAMP. Through simultaneous binding of PDE3B to RAPGEF3 and PIK3R6 is assembled in a signaling complex in which it activates the PI3K gamma complex and which is involved in angiogenesis. Plays a role in the modulation of the cAMP-induced dynamic control of endothelial barrier function through a pathway that is independent on Rho-mediated signaling. Required for the actin rearrangement at cell-cell junctions, such as stress fibers and junctional actin. This chain is Rap guanine nucleotide exchange factor 3 (Rapgef3), found in Mus musculus (Mouse).